Here is a 223-residue protein sequence, read N- to C-terminus: Phosphoglycolate phosphatase (223 aa).

Catalysis depends on aspartate 10, which acts as the Nucleophile. Residues aspartate 10 and aspartate 12 each coordinate Mg(2+). Lysine 149 contributes to the substrate binding site. Aspartate 172 and aspartate 176 together coordinate Mg(2+).

This sequence belongs to the archaeal SPP-like hydrolase family. Mg(2+) serves as cofactor.

It carries out the reaction 2-phosphoglycolate + H2O = glycolate + phosphate. Functionally, catalyzes the dephosphorylation of 2-phosphoglycolate. The sequence is that of Phosphoglycolate phosphatase from Archaeoglobus fulgidus (strain ATCC 49558 / DSM 4304 / JCM 9628 / NBRC 100126 / VC-16).